A 3184-amino-acid polypeptide reads, in one-letter code: Probable serine/threonine-protein kinase pats1 (3184 aa).

Pro residues predominate over residues 369 to 378 (DPPPPPPSNS). 2 disordered regions span residues 369 to 516 (DPPP…QIPP) and 913 to 1013 (SITR…TSIL). A compositionally biased stretch (low complexity) spans 379-415 (SPPISKSTSNNNLNVSNYHNNNNNNNNSNSNLSNSGN). Residues 421 to 450 (DFQSQNLVKSYNRENSGNSLNSMLHQTSLP) show a composition bias toward polar residues. Over residues 451–512 (NNNNSNVVNN…NNNNSNNNNS (62 aa)) the composition is skewed to low complexity. The Myotubularin phosphatase domain maps to 842–1348 (CFPDHSLLQE…FQDTMWNEYF (507 aa)). Residues 913-934 (SITRATSPEDQNNGSSNYLLTP) show a composition bias toward polar residues. Residues 935–993 (NSPNSSSSNLANNNNSNNNNINNNNNNNNNNNNNNNNNSNNNNNNNNNNNNNNNNNNNN) are compositionally biased toward low complexity. Polar residues predominate over residues 1000-1013 (SRSTTIDNGQTSIL). LRR repeat units follow at residues 1391-1412 (FLET…STLY), 1416-1438 (GLRE…SSLV), 1439-1460 (KLEK…TVVL), 1467-1488 (SLTE…FSMF), 1491-1512 (SLKK…LGML), 1514-1535 (NLIE…GVGI), 1541-1563 (KLCI…GDLK), 1564-1585 (SLEK…FRQL), 1587-1608 (NLEE…VCFL), 1610-1631 (NLKK…ISQL), 1633-1654 (KLMI…IGQL), 1656-1678 (QLVS…MGLL), and 1680-1701 (NLVE…IVSL). In terms of domain architecture, Roc spans 1716-1910 (GQEQCYKMKL…EKLEALVQSQ (195 aa)). A small GTPase-like region spans residues 1716–1910 (GQEQCYKMKL…EKLEALVQSQ (195 aa)). Residues 1729 to 1736 (GQENVGKT), 1797 to 1801 (DFAGQ), and 1854 to 1857 (THLD) each bind GTP. Residues 1918–2127 (PRSYMLLENL…KCYWKNGMIL (210 aa)) form the COR domain. Residues 2247–2519 (LMIEELIGEG…RLIKIAEAMF (273 aa)) form the Protein kinase domain. ATP contacts are provided by residues 2253–2261 (IGEGGAALV) and Lys-2274. The active-site Proton acceptor is Asp-2379. Disordered stretches follow at residues 2528–2609 (YQQQ…TISH) and 2652–2671 (NSIN…NSLL). A compositionally biased stretch (low complexity) spans 2529-2555 (QQQQQQQQQQQQSSPSKSSSTSPIIKS). Positions 2556-2576 (LNLSTVSELGESSNQTPKQNI) are enriched in polar residues. WD repeat units follow at residues 2745 to 2785 (PNQG…KYIQ), 2790 to 2829 (ANKD…KIKS), 2909 to 2947 (AHER…HTIE), 2949 to 2986 (AHSS…LVSE), and 2990 to 3040 (KHKD…NSRS). Residues 3055–3126 (GSSNSITNSN…NYYYSNNVNS (72 aa)) are compositionally biased toward low complexity. The interval 3055–3164 (GSSNSITNSN…TPPGSKGLMQ (110 aa)) is disordered. The segment covering 3141–3157 (HEQTSPNSATPLSSTPP) has biased composition (polar residues).

This sequence belongs to the protein kinase superfamily. TKL Ser/Thr protein kinase family. ROCO subfamily.

The catalysed reaction is L-seryl-[protein] + ATP = O-phospho-L-seryl-[protein] + ADP + H(+). It catalyses the reaction L-threonyl-[protein] + ATP = O-phospho-L-threonyl-[protein] + ADP + H(+). May act as a serine/threonine-protein kinase and guanine-nucleotide releasing factor. Essential regulator of cytokinesis involved in the binding to actomyosin cytoskeleton. The polypeptide is Probable serine/threonine-protein kinase pats1 (pats1) (Dictyostelium discoideum (Social amoeba)).